A 532-amino-acid polypeptide reads, in one-letter code: MNFGRVNPAQTLDAQGITGLGEVHYNLIEPALVEAAVKRGEGRLGRGGAFLCSTGAFTGRSPKDKFVVRTPSVEDTIWWENNAPMDPEAFDRLHADMLEHMKGRTYFVQDLFAGADPELRLDVRMVTELAWHGLFIRHMLRRPERTELDSFVPEWTVINCPSFKADPARHGCRTDTVITLNFDKKLILIANTEYAGENKKSVFTLLNYILPGKGVMAMHCSANHAIGNTDDAAVFFGLSGTGKTTLSADPSRTLIGDDEHGWSDKGTFNFEGGCYAKTINLSPEAEPEIYATTSKFATVVENMVYNEETLELDFDDDSLTANTRCAYPLEYISNASATGMGGHPKNVIMLTCDAFGVLPPIARLTPAQAMYHFLSGFTSKVAGTERGVTEPQPTFSTCFGAPFMPRRPEVYGKLLQEKITSLGATCWLVNTGWTGGAYGTGKRMPIKATRALLTAALDGSLANVTFRKDPNFGFEVPTELHGVDSSLLDPRSTWADPAAYDAQAKKLVEMFANNFAQYVPYIDADVKAAAIG.

Arginine 60, tyrosine 194, and lysine 200 together coordinate substrate. Residues lysine 200, histidine 219, and glycine 237–threonine 245 contribute to the ATP site. Mn(2+)-binding residues include lysine 200 and histidine 219. Mn(2+) is bound at residue aspartate 258. Residues glutamate 286, arginine 324, and threonine 449 each contribute to the ATP site. Arginine 324 provides a ligand contact to substrate.

Belongs to the phosphoenolpyruvate carboxykinase (ATP) family. The cofactor is Mn(2+).

It localises to the cytoplasm. The enzyme catalyses oxaloacetate + ATP = phosphoenolpyruvate + ADP + CO2. It functions in the pathway carbohydrate biosynthesis; gluconeogenesis. Its function is as follows. Involved in the gluconeogenesis. Catalyzes the conversion of oxaloacetate (OAA) to phosphoenolpyruvate (PEP) through direct phosphoryl transfer between the nucleoside triphosphate and OAA. This is Phosphoenolpyruvate carboxykinase (ATP) from Cereibacter sphaeroides (strain ATCC 17025 / ATH 2.4.3) (Rhodobacter sphaeroides).